A 360-amino-acid chain; its full sequence is Flavone O-methyltransferase 1 (360 aa).

Residue 127 to 133 participates in substrate binding; it reads MNQDKVL. A substrate binding region spans residues 159-177; it reads AFEYHGTDPRFNRVFNEGM. Positions 205, 228, 248, 249, and 262 each coordinate S-adenosyl-L-methionine. Histidine 266 functions as the Proton acceptor in the catalytic mechanism.

The protein belongs to the class I-like SAM-binding methyltransferase superfamily. Cation-independent O-methyltransferase family. COMT subfamily. In terms of assembly, homodimer.

Functionally, flavone-specific O-methyltransferase with a preference for flavones &gt; flavonols. Active with tricetin, luteolin, quercitin and eriodictyol. Very low activity with phenylpropanoids (5-hydroxyferulic acid and caffeic acid). Catalyzes the sequential O-methylation of tricetin via 3'-O-methyltricetin, 3',5'-O-methyltricetin to 3',4',5'-O-trimethyltricetin. This chain is Flavone O-methyltransferase 1 (OMT1), found in Triticum aestivum (Wheat).